The primary structure comprises 102 residues: N(4)-acetylcytidine amidohydrolase (102 aa).

An ASCH domain is found at Thr-6–Asp-92. Lys-20 functions as the Proton acceptor in the catalytic mechanism. The active-site Nucleophile is the Thr-23. Residue Glu-73 is the Proton donor of the active site.

It belongs to the N(4)-acetylcytidine amidohydrolase family.

The catalysed reaction is N(4)-acetylcytidine + H2O = cytidine + acetate + H(+). It catalyses the reaction N(4)-acetyl-2'-deoxycytidine + H2O = 2'-deoxycytidine + acetate + H(+). It carries out the reaction N(4)-acetylcytosine + H2O = cytosine + acetate + H(+). Its function is as follows. Catalyzes the hydrolysis of N(4)-acetylcytidine (ac4C). This is N(4)-acetylcytidine amidohydrolase from Yersinia pseudotuberculosis serotype O:1b (strain IP 31758).